Here is a 344-residue protein sequence, read N- to C-terminus: Uroporphyrinogen decarboxylase (344 aa).

Substrate contacts are provided by residues 29–33 (RQAGR), Asp-79, Tyr-153, Ser-208, and His-324.

It belongs to the uroporphyrinogen decarboxylase family. As to quaternary structure, homodimer.

Its subcellular location is the cytoplasm. The enzyme catalyses uroporphyrinogen III + 4 H(+) = coproporphyrinogen III + 4 CO2. It participates in porphyrin-containing compound metabolism; protoporphyrin-IX biosynthesis; coproporphyrinogen-III from 5-aminolevulinate: step 4/4. Catalyzes the decarboxylation of four acetate groups of uroporphyrinogen-III to yield coproporphyrinogen-III. The polypeptide is Uroporphyrinogen decarboxylase (Rhizorhabdus wittichii (strain DSM 6014 / CCUG 31198 / JCM 15750 / NBRC 105917 / EY 4224 / RW1) (Sphingomonas wittichii)).